The chain runs to 409 residues: FAD-dependent monooxygenase phnB (409 aa).

FAD is bound by residues Glu-35, Ala-50, Arg-110, and Asp-311.

It belongs to the paxM FAD-dependent monooxygenase family. FAD serves as cofactor.

It catalyses the reaction 3,6,7,9-tetrahydroxy-3-methyl-2,3-dihydro-1H-naphtho[2,1-b]pyran-1-one + NADPH + O2 + H(+) = 2,3,4,7,9-pentahydroxy-6-methyl-1H-phenalen-1-one + NADP(+) + 2 H2O. Its pathway is secondary metabolite biosynthesis. Functionally, FAD-dependent monooxygenase; part of the gene cluster that mediates the biosynthesis of phenalenones such as herqueinone, compounds that have been reported to treat tumors, bacterial infections and/or mycoses, and rheumatic diseases. The non-reducing polyketide synthase phnA synthesizes the heptaketide backbone and cyclizes it into the angular, hemiketal-containing naphtho-gamma-pyrone prephenalenone. The product template (PT) domain of phnA catalyzes only the C4-C9 aldol condensation, which is unprecedented among known PT domains. The transformation of prephenalenone to phenalenones requires an FAD-dependent monooxygenase phnB, which catalyzes the C2 aromatic hydroxylation of prephenalenone and ring opening of the gamma-pyrone ring simultaneously. Subsequent intramolecular deprotonation of C3 phenolic oxygen accelerates phenalenone ring closure to yield the tricyclic phenalenone core with a C2 hydroxylation. The prenyltransferase phnF further catalyzes reverse C-prenylation of phenalenone by direct electrophilic substitution at C6, or possibly via first a forward O-prenylation of a neighboring phenol in phenalenone, followed by a Claisen rearrangement. The hydroalkoxylation enzyme phnH catalyzes the 5-exo-trig cyclization via acid catalysis after the spontaneous deprotonation of 7-OH, which leads to the formation of the dihydrobenzofuran atrovenetin. Atrovenetin is further converted to deoxyherqueinone by the O-methyltransferase phnC which can methylate C2-OH to stabilize the northern portion of the phenalenone core. Finally, the oxidoreductase phnG converts deoxyherqueinone to herqueinone via C6 hydroxylation. This chain is FAD-dependent monooxygenase phnB, found in Penicillium herquei.